A 235-amino-acid chain; its full sequence is Sugar fermentation stimulation protein homolog (235 aa).

It belongs to the SfsA family.

The sequence is that of Sugar fermentation stimulation protein homolog from Alkaliphilus oremlandii (strain OhILAs) (Clostridium oremlandii (strain OhILAs)).